Consider the following 433-residue polypeptide: 23S rRNA (uracil(1939)-C(5))-methyltransferase RlmD (433 aa).

The 53-residue stretch at 1 to 53 (MPVAVIESLDHEGRGVAHVDGKVVFVEGALAGEQVEYTVYRQRPSYDLAEATR) folds into the TRAM domain. Positions 66, 72, 75, and 154 each coordinate [4Fe-4S] cluster. Residues Q263, F292, N297, E313, N341, and D362 each contribute to the S-adenosyl-L-methionine site. C389 serves as the catalytic Nucleophile.

Belongs to the class I-like SAM-binding methyltransferase superfamily. RNA M5U methyltransferase family. RlmD subfamily.

It carries out the reaction uridine(1939) in 23S rRNA + S-adenosyl-L-methionine = 5-methyluridine(1939) in 23S rRNA + S-adenosyl-L-homocysteine + H(+). Functionally, catalyzes the formation of 5-methyl-uridine at position 1939 (m5U1939) in 23S rRNA. The polypeptide is 23S rRNA (uracil(1939)-C(5))-methyltransferase RlmD (Aromatoleum aromaticum (strain DSM 19018 / LMG 30748 / EbN1) (Azoarcus sp. (strain EbN1))).